The following is a 150-amino-acid chain: Detocs response regulatory protein DtcB (150 aa).

Positions 2 to 150 constitute a Response regulatory domain; it reads KILIADDNIQ…TDLIKKITEL (149 aa). The residue at position 54 (Asp54) is a 4-aspartylphosphate.

Post-translationally, probably phosphorylated by DtcA.

In terms of biological role, possible phosphate scavenger member of the two-component regulatory system Detocs that confers resistance to bacteriophage. When the system (DtcA-DtcB-DtcC) is expressed in a susceptible E.coli (strain MG1655) it confers resistance to bacteriophages T2, T4, T5, T7, SECphi4, SECphi6 and SECphi27; the level of resistance varies, resistance to T2, T7 and SECphi4 is not very high. DtcA probably autophosphorylates upon sensing viral infection, and subsequently transfers the phosphate signal to DtcC which activates it, leading to an antiviral defense; DtcB (this subunit) may scavenge phosphorylation signals from accidental activation of DtcA. This chain is Detocs response regulatory protein DtcB, found in Enterobacter cloacae (strain JD6301).